Here is a 391-residue protein sequence, read N- to C-terminus: Ferrochelatase (391 aa).

Fe cation-binding residues include H196 and E281.

It belongs to the ferrochelatase family.

The protein localises to the cytoplasm. The catalysed reaction is heme b + 2 H(+) = protoporphyrin IX + Fe(2+). It participates in porphyrin-containing compound metabolism; protoheme biosynthesis; protoheme from protoporphyrin-IX: step 1/1. Its function is as follows. Catalyzes the ferrous insertion into protoporphyrin IX. This chain is Ferrochelatase, found in Prochlorococcus marinus (strain MIT 9211).